A 314-amino-acid chain; its full sequence is Serine/threonine-protein phosphatase SIT4 (314 aa).

Mn(2+)-binding residues include D53, H55, D85, and N117. The Proton donor role is filled by H118. Residues H167 and H241 each coordinate Mn(2+).

The protein belongs to the PPP phosphatase family. PP-6 (PP-V) subfamily. Interacts with MDS3. Mn(2+) is required as a cofactor.

The protein resides in the cytoplasm. The enzyme catalyses O-phospho-L-seryl-[protein] + H2O = L-seryl-[protein] + phosphate. The catalysed reaction is O-phospho-L-threonyl-[protein] + H2O = L-threonyl-[protein] + phosphate. Its function is as follows. Serine/threonine protein phosphatase which is involved in the dephosphorylation of the large subunit of RNA polymerase II. Is required in late G1 for normal G1 cyclin expression, bud initiation and expression of certain genes that are periodically expressed during late G1. Plays a role during hyphal growth through the regulation of cell wall biogenesis, osmosensing and protein translation. Involved in virulence in a mouse systemic infection model. The sequence is that of Serine/threonine-protein phosphatase SIT4 (SIT4) from Candida albicans (strain SC5314 / ATCC MYA-2876) (Yeast).